We begin with the raw amino-acid sequence, 465 residues long: Phospholipase A1-II 5 (465 aa).

Residue Ser-233 is the Acyl-ester intermediate of the active site. Catalysis depends on charge relay system residues Ser-233, Asp-297, and His-336.

The protein belongs to the AB hydrolase superfamily. Lipase family.

The protein localises to the cytoplasm. In terms of biological role, acylhydrolase that catalyzes the hydrolysis of phospholipids at the sn-1 position. The protein is Phospholipase A1-II 5 of Oryza sativa subsp. japonica (Rice).